The sequence spans 257 residues: Thiazole synthase (257 aa).

Catalysis depends on K98, which acts as the Schiff-base intermediate with DXP. Residues G159, 185–186 (AG), and 207–208 (NT) each bind 1-deoxy-D-xylulose 5-phosphate.

It belongs to the ThiG family. In terms of assembly, homotetramer. Forms heterodimers with either ThiH or ThiS.

The protein localises to the cytoplasm. It carries out the reaction [ThiS sulfur-carrier protein]-C-terminal-Gly-aminoethanethioate + 2-iminoacetate + 1-deoxy-D-xylulose 5-phosphate = [ThiS sulfur-carrier protein]-C-terminal Gly-Gly + 2-[(2R,5Z)-2-carboxy-4-methylthiazol-5(2H)-ylidene]ethyl phosphate + 2 H2O + H(+). It participates in cofactor biosynthesis; thiamine diphosphate biosynthesis. In terms of biological role, catalyzes the rearrangement of 1-deoxy-D-xylulose 5-phosphate (DXP) to produce the thiazole phosphate moiety of thiamine. Sulfur is provided by the thiocarboxylate moiety of the carrier protein ThiS. In vitro, sulfur can be provided by H(2)S. The protein is Thiazole synthase of Anaeromyxobacter dehalogenans (strain 2CP-C).